A 209-amino-acid polypeptide reads, in one-letter code: Pyroglutamyl-peptidase 1 (209 aa).

Residues Glu-85, Cys-149, and His-168 contribute to the active site.

Belongs to the peptidase C15 family. Monomer.

The protein resides in the cytoplasm. The catalysed reaction is Release of an N-terminal pyroglutamyl group from a polypeptide, the second amino acid generally not being Pro.. Removes 5-oxoproline from various penultimate amino acid residues except L-proline. This is Pyroglutamyl-peptidase 1 (Pgpep1) from Mus musculus (Mouse).